We begin with the raw amino-acid sequence, 272 residues long: Acetylglutamate kinase (272 aa).

Substrate contacts are provided by residues 46–47 (GA), arginine 68, and asparagine 166.

The protein belongs to the acetylglutamate kinase family. ArgB subfamily.

The protein localises to the cytoplasm. It carries out the reaction N-acetyl-L-glutamate + ATP = N-acetyl-L-glutamyl 5-phosphate + ADP. It functions in the pathway amino-acid biosynthesis; L-arginine biosynthesis; N(2)-acetyl-L-ornithine from L-glutamate: step 2/4. Catalyzes the ATP-dependent phosphorylation of N-acetyl-L-glutamate. In Dehalococcoides mccartyi (strain ATCC BAA-2100 / JCM 16839 / KCTC 5957 / BAV1), this protein is Acetylglutamate kinase.